The sequence spans 326 residues: Protein FAM50 homolog (326 aa).

The interval 76–112 (EISNRDLQVARGASSSTSLAKDSQEAREKEEHVAKHT) is disordered. Residues 97–109 (DSQEAREKEEHVA) are compositionally biased toward basic and acidic residues.

The protein belongs to the FAM50 family.

This is Protein FAM50 homolog from Caenorhabditis briggsae.